The following is a 436-amino-acid chain: Methylenetetrahydrofolate--tRNA-(uracil-5-)-methyltransferase TrmFO (436 aa).

8 to 13 serves as a coordination point for FAD; the sequence is GAGLAG.

This sequence belongs to the MnmG family. TrmFO subfamily. The cofactor is FAD.

The protein localises to the cytoplasm. The enzyme catalyses uridine(54) in tRNA + (6R)-5,10-methylene-5,6,7,8-tetrahydrofolate + NADH + H(+) = 5-methyluridine(54) in tRNA + (6S)-5,6,7,8-tetrahydrofolate + NAD(+). It catalyses the reaction uridine(54) in tRNA + (6R)-5,10-methylene-5,6,7,8-tetrahydrofolate + NADPH + H(+) = 5-methyluridine(54) in tRNA + (6S)-5,6,7,8-tetrahydrofolate + NADP(+). In terms of biological role, catalyzes the folate-dependent formation of 5-methyl-uridine at position 54 (M-5-U54) in all tRNAs. In Persephonella marina (strain DSM 14350 / EX-H1), this protein is Methylenetetrahydrofolate--tRNA-(uracil-5-)-methyltransferase TrmFO.